Reading from the N-terminus, the 470-residue chain is Regulator of microtubule dynamics protein 3 (470 aa).

Topologically, residues 1–12 (MSRLGALGGSRA) are mitochondrial intermembrane. A helical transmembrane segment spans residues 13–35 (GLGLLLGTAAGLGFLCVLYSQRW). At 36 to 470 (KRTQRHGRSH…DLEELEVILG (435 aa)) the chain is on the cytoplasmic side. 4 positions are modified to phosphoserine: Ser44, Ser46, Ser50, and Ser57. Residues 91 to 125 (LDRLDFVLTSLMALRREVEELQRSLQGLAGEIVGE) are a coiled coil. An FFAT motif is present at residues 157–163 (VYFTASS). Thr160 carries the post-translational modification Phosphothreonine. A disordered region spans residues 168–205 (TDAESEGGYTTANAESDYERDSDKESGDAEDEVSCETV). Phosphoserine is present on residues Ser183, Ser193, Ser212, and Ser233. Positions 184–194 (DYERDSDKESG) are enriched in basic and acidic residues.

Belongs to the RMDN family. In terms of assembly, interacts with PTPN2. Interacts with microtubules. Interacts with VAPB. Interacts (via FFAT motif) with MOSPD2 (via MSP domain). Interacts (via phosphorylated FFAT motif) with MOSPD2, VAPA and VAPB. Phosphorylation at Thr-160 of the FFAT motif activates interaction with MOSPD2, VAPA and VAPB.

The protein resides in the mitochondrion outer membrane. The protein localises to the cytoplasm. Its subcellular location is the nucleus. It is found in the cytoskeleton. It localises to the spindle. The protein resides in the spindle pole. Involved in cellular calcium homeostasis regulation. May participate in differentiation and apoptosis of keratinocytes. Overexpression induces apoptosis. This Mus musculus (Mouse) protein is Regulator of microtubule dynamics protein 3.